Here is a 165-residue protein sequence, read N- to C-terminus: RNA pyrophosphohydrolase (165 aa).

A Nudix hydrolase domain is found at 13–154 (PYRQGVGIML…KRPVYEQVVA (142 aa)). Positions 46–67 (GGIDAGEDPETAAWREMEEEIG) match the Nudix box motif.

It belongs to the Nudix hydrolase family. RppH subfamily. A divalent metal cation is required as a cofactor.

Accelerates the degradation of transcripts by removing pyrophosphate from the 5'-end of triphosphorylated RNA, leading to a more labile monophosphorylated state that can stimulate subsequent ribonuclease cleavage. The protein is RNA pyrophosphohydrolase of Rhodospirillum rubrum (strain ATCC 11170 / ATH 1.1.1 / DSM 467 / LMG 4362 / NCIMB 8255 / S1).